The following is a 98-amino-acid chain: Cystatin-B (98 aa).

Position 1 is an N-acetylmethionine (Met1). Positions 46–50 (QVVAG) match the Secondary area of contact motif.

It belongs to the cystatin family. As to quaternary structure, able to form dimers stabilized by noncovalent forces.

It is found in the cytoplasm. It localises to the nucleus. This is an intracellular thiol proteinase inhibitor. Tightly binding reversible inhibitor of cathepsins L, H and B. This Macaca fuscata fuscata (Japanese macaque) protein is Cystatin-B (CSTB).